A 325-amino-acid polypeptide reads, in one-letter code: Probable cell division protein WhiA (325 aa).

Residues Ser280 to Lys313 constitute a DNA-binding region (H-T-H motif).

This sequence belongs to the WhiA family.

In terms of biological role, involved in cell division and chromosome segregation. This is Probable cell division protein WhiA from Caldicellulosiruptor bescii (strain ATCC BAA-1888 / DSM 6725 / KCTC 15123 / Z-1320) (Anaerocellum thermophilum).